The sequence spans 331 residues: tRNA-modifying protein YgfZ (331 aa).

Folate contacts are provided by Trp-28 and Trp-191.

Belongs to the tRNA-modifying YgfZ family.

Its subcellular location is the cytoplasm. Folate-binding protein involved in regulating the level of ATP-DnaA and in the modification of some tRNAs. It is probably a key factor in regulatory networks that act via tRNA modification, such as initiation of chromosomal replication. The chain is tRNA-modifying protein YgfZ from Edwardsiella ictaluri (strain 93-146).